The primary structure comprises 112 residues: 2Fe-2S ferredoxin (112 aa).

Residues 5-107 form the 2Fe-2S ferredoxin-type domain; it reads IKVTFIINDG…GIKVHLPAAT (103 aa). The [2Fe-2S] cluster site is built by cysteine 42, cysteine 48, cysteine 51, and cysteine 88.

Belongs to the adrenodoxin/putidaredoxin family. It depends on [2Fe-2S] cluster as a cofactor.

Functionally, ferredoxin are iron-sulfur proteins that transfer electrons in a wide variety of metabolic reactions. This Rickettsia rickettsii protein is 2Fe-2S ferredoxin (fdxB).